A 428-amino-acid polypeptide reads, in one-letter code: Adenylosuccinate synthetase (428 aa).

GTP contacts are provided by residues 12 to 18 (GDEGKGK) and 40 to 42 (GHT). Catalysis depends on D13, which acts as the Proton acceptor. D13 and G40 together coordinate Mg(2+). Residues 13–16 (DEGK), 38–41 (NAGH), T130, R144, Q225, T240, and R304 contribute to the IMP site. Residue H41 is the Proton donor of the active site. Residue 300-306 (TTTGRPR) coordinates substrate. GTP-binding positions include R306, 332 to 334 (KLD), and 414 to 416 (SVG).

This sequence belongs to the adenylosuccinate synthetase family. In terms of assembly, homodimer. Mg(2+) is required as a cofactor.

The protein localises to the cytoplasm. It catalyses the reaction IMP + L-aspartate + GTP = N(6)-(1,2-dicarboxyethyl)-AMP + GDP + phosphate + 2 H(+). The protein operates within purine metabolism; AMP biosynthesis via de novo pathway; AMP from IMP: step 1/2. Its function is as follows. Plays an important role in the de novo pathway of purine nucleotide biosynthesis. Catalyzes the first committed step in the biosynthesis of AMP from IMP. This chain is Adenylosuccinate synthetase, found in Caldanaerobacter subterraneus subsp. tengcongensis (strain DSM 15242 / JCM 11007 / NBRC 100824 / MB4) (Thermoanaerobacter tengcongensis).